A 393-amino-acid chain; its full sequence is Zinc finger CCHC domain-containing protein 18 (393 aa).

Disordered regions lie at residues 281 to 300 (VEPE…RGTA) and 313 to 341 (DDFD…RTRK). 2 stretches are compositionally biased toward polar residues: residues 291–300 (PGASSLRGTA) and 320–331 (PSTSSGSGQRNN). A CCHC-type zinc finger spans residues 346–363 (IRCPHCGEEGHAKETCDN).

The protein belongs to the ZCCHC12 family.

In Mus musculus (Mouse), this protein is Zinc finger CCHC domain-containing protein 18.